A 546-amino-acid chain; its full sequence is Chaperonin GroEL (546 aa).

Residues 29–32, Lys50, 86–90, Gly414, 478–480, and Asp494 each bind ATP; these read TLGP, DGTTT, and NAA.

This sequence belongs to the chaperonin (HSP60) family. In terms of assembly, forms a cylinder of 14 subunits composed of two heptameric rings stacked back-to-back. Interacts with the co-chaperonin GroES.

The protein resides in the cytoplasm. The enzyme catalyses ATP + H2O + a folded polypeptide = ADP + phosphate + an unfolded polypeptide.. Together with its co-chaperonin GroES, plays an essential role in assisting protein folding. The GroEL-GroES system forms a nano-cage that allows encapsulation of the non-native substrate proteins and provides a physical environment optimized to promote and accelerate protein folding. The chain is Chaperonin GroEL from Psychrobacter arcticus (strain DSM 17307 / VKM B-2377 / 273-4).